The primary structure comprises 300 residues: Ribonuclease HIII (300 aa).

The RNase H type-2 domain occupies Arg86–Gln300. 3 residues coordinate a divalent metal cation: Asp92, Glu93, and Asp196.

This sequence belongs to the RNase HII family. RnhC subfamily. Mn(2+) serves as cofactor. The cofactor is Mg(2+).

Its subcellular location is the cytoplasm. It carries out the reaction Endonucleolytic cleavage to 5'-phosphomonoester.. Functionally, endonuclease that specifically degrades the RNA of RNA-DNA hybrids. This chain is Ribonuclease HIII, found in Chlamydia trachomatis serovar A (strain ATCC VR-571B / DSM 19440 / HAR-13).